Consider the following 370-residue polypeptide: Protein RecA (370 aa).

The segment at methionine 1–aspartate 20 is disordered. Glycine 78–threonine 85 contributes to the ATP binding site.

Belongs to the RecA family.

The protein resides in the cytoplasm. Functionally, can catalyze the hydrolysis of ATP in the presence of single-stranded DNA, the ATP-dependent uptake of single-stranded DNA by duplex DNA, and the ATP-dependent hybridization of homologous single-stranded DNAs. It interacts with LexA causing its activation and leading to its autocatalytic cleavage. This is Protein RecA from Prochlorococcus marinus (strain MIT 9515).